A 520-amino-acid chain; its full sequence is Type I restriction enzyme EcoprrI methylase subunit (520 aa).

S-adenosyl-L-methionine-binding positions include E198–Q203, S230–S232, and E254.

This sequence belongs to the N(4)/N(6)-methyltransferase family. In terms of assembly, the type I restriction/modification system is composed of three polypeptides R, M and S; the restriction enzyme has stoichiometry R(2)M(2)S(1) while the methyltransferase is M(2)S(1).

It catalyses the reaction a 2'-deoxyadenosine in DNA + S-adenosyl-L-methionine = an N(6)-methyl-2'-deoxyadenosine in DNA + S-adenosyl-L-homocysteine + H(+). The subtype gamma methyltransferase (M) subunit of a type I restriction enzyme. The M and S subunits together form a methyltransferase (MTase) that methylates two adenine residues of the sequence 5'-CCAN(7)ATGC-3'. In the presence of the R subunit the complex can also act as an endonuclease, binding to the same target sequence but cutting the DNA some distance from this site. Whether the DNA is cut or modified depends on the methylation state of the target sequence. When the target site is unmodified, the DNA is cut. When the target site is hemimethylated, the complex acts as a maintenance MTase modifying the DNA so that both strands become methylated. After locating a non-methylated recognition site, the enzyme complex serves as a molecular motor that translocates DNA in an ATP-dependent manner until a collision occurs that triggers cleavage. The sequence is that of Type I restriction enzyme EcoprrI methylase subunit from Escherichia coli.